We begin with the raw amino-acid sequence, 309 residues long: Protein FdhE homolog (309 aa).

The protein belongs to the FdhE family.

It is found in the cytoplasm. Its function is as follows. Necessary for formate dehydrogenase activity. This is Protein FdhE homolog from Yersinia enterocolitica serotype O:8 / biotype 1B (strain NCTC 13174 / 8081).